The sequence spans 198 residues: Nucleoid occlusion factor SlmA (198 aa).

One can recognise an HTH tetR-type domain in the interval 10–70 (NRREEILQSL…SLIEFIEDSL (61 aa)). Residues 33-52 (TTAKLAASVGVSEAALYRHF) constitute a DNA-binding region (H-T-H motif). Residues 117 to 144 (EQDRLQGRINQLFERIEAQLRQVLREKR) are a coiled coil.

This sequence belongs to the nucleoid occlusion factor SlmA family. Homodimer. Interacts with FtsZ.

The protein resides in the cytoplasm. The protein localises to the nucleoid. Required for nucleoid occlusion (NO) phenomenon, which prevents Z-ring formation and cell division over the nucleoid. Acts as a DNA-associated cell division inhibitor that binds simultaneously chromosomal DNA and FtsZ, and disrupts the assembly of FtsZ polymers. SlmA-DNA-binding sequences (SBS) are dispersed on non-Ter regions of the chromosome, preventing FtsZ polymerization at these regions. This Escherichia coli O127:H6 (strain E2348/69 / EPEC) protein is Nucleoid occlusion factor SlmA.